Here is a 250-residue protein sequence, read N- to C-terminus: Glutamate racemase (250 aa).

Substrate contacts are provided by residues 7-8 (DS) and 39-40 (YG). Cysteine 70 functions as the Proton donor/acceptor in the catalytic mechanism. 71–72 (NT) contributes to the substrate binding site. Cysteine 180 serves as the catalytic Proton donor/acceptor. 181–182 (TH) contacts substrate.

It belongs to the aspartate/glutamate racemases family.

It catalyses the reaction L-glutamate = D-glutamate. It participates in cell wall biogenesis; peptidoglycan biosynthesis. In terms of biological role, provides the (R)-glutamate required for cell wall biosynthesis. In Campylobacter jejuni subsp. jejuni serotype O:2 (strain ATCC 700819 / NCTC 11168), this protein is Glutamate racemase.